Here is a 454-residue protein sequence, read N- to C-terminus: Alpha-1,3-mannosyl-glycoprotein 4-beta-N-acetylglucosaminyltransferase C (454 aa).

At M1–K6 the chain is on the cytoplasmic side. A helical; Signal-anchor for type II membrane protein membrane pass occupies residues K7–Y24. Residues M25 to I454 lie on the Lumenal side of the membrane. 2 N-linked (GlcNAc...) asparagine glycosylation sites follow: N58 and N189.

Belongs to the glycosyltransferase 54 family. The cofactor is a divalent metal cation.

Its subcellular location is the golgi apparatus membrane. The enzyme catalyses N(4)-{beta-D-GlcNAc-(1-&gt;2)-alpha-D-Man-(1-&gt;3)-[beta-D-GlcNAc-(1-&gt;2)-alpha-D-Man-(1-&gt;6)]-beta-D-Man-(1-&gt;4)-beta-D-GlcNAc-(1-&gt;4)-beta-D-GlcNAc}-L-asparaginyl-[protein] + UDP-N-acetyl-alpha-D-glucosamine = N(4)-{beta-D-GlcNAc-(1-&gt;2)-[beta-D-GlcNAc-(1-&gt;4)]-alpha-D-Man-(1-&gt;3)-[beta-D-GlcNAc-(1-&gt;2)-alpha-D-Man-(1-&gt;6)]-beta-D-Man-(1-&gt;4)-beta-D-GlcNAc-(1-&gt;4)-beta-D-GlcNAc}-L-asparaginyl-[protein] + UDP + H(+). It participates in protein modification; protein glycosylation. Glycosyltransferase that participates in the transfer of N-acetylglucosamine (GlcNAc) to the core mannose residues of N-linked glycans. Catalyzes the formation of the GlcNAcbeta1-4 branch on the GlcNAcbeta1-2Manalpha1-3 arm of the core structure of N-linked glycans. This is Alpha-1,3-mannosyl-glycoprotein 4-beta-N-acetylglucosaminyltransferase C (mgat4c) from Danio rerio (Zebrafish).